The following is a 356-amino-acid chain: Methionine import ATP-binding protein MetN (356 aa).

Positions 7–250 (IKLDNIDVTF…PRESLTQDFI (244 aa)) constitute an ABC transporter domain. Residue 43-50 (GYSGAGKS) participates in ATP binding.

This sequence belongs to the ABC transporter superfamily. Methionine importer (TC 3.A.1.24) family. In terms of assembly, the complex is composed of two ATP-binding proteins (MetN), two transmembrane proteins (MetI) and a solute-binding protein (MetQ).

The protein resides in the cell membrane. It carries out the reaction L-methionine(out) + ATP + H2O = L-methionine(in) + ADP + phosphate + H(+). It catalyses the reaction D-methionine(out) + ATP + H2O = D-methionine(in) + ADP + phosphate + H(+). Part of the ABC transporter complex MetNIQ involved in methionine import. Responsible for energy coupling to the transport system. This chain is Methionine import ATP-binding protein MetN, found in Streptococcus agalactiae serotype III (strain NEM316).